The following is an 803-amino-acid chain: Translation initiation factor IF-2 (803 aa).

Disordered stretches follow at residues 95-125 (PVVEQKRETEPAPTQEVPLTSDTTNLNEKAE) and 138-178 (EVKE…EREE). A compositionally biased stretch (polar residues) spans 111–121 (VPLTSDTTNLN). Residues 138–155 (EVKEEAKKTPSEKKETPK) are compositionally biased toward basic and acidic residues. Basic residues predominate over residues 156-167 (KGPRKETRRSRK). The span at 168 to 178 (PDKEDKWEREE) shows a compositional bias: basic and acidic residues. In terms of domain architecture, tr-type G spans 302–471 (PRAPVVTIMG…LLQAEVLELK (170 aa)). The G1 stretch occupies residues 311–318 (GHVDHGKT). 311–318 (GHVDHGKT) provides a ligand contact to GTP. Residues 336–340 (GITQH) are G2. The interval 357–360 (DTPG) is G3. GTP is bound by residues 357–361 (DTPGH) and 411–414 (NKID). The segment at 411-414 (NKID) is G4. A G5 region spans residues 447–449 (SAK).

The protein belongs to the TRAFAC class translation factor GTPase superfamily. Classic translation factor GTPase family. IF-2 subfamily.

It localises to the cytoplasm. Its function is as follows. One of the essential components for the initiation of protein synthesis. Protects formylmethionyl-tRNA from spontaneous hydrolysis and promotes its binding to the 30S ribosomal subunits. Also involved in the hydrolysis of GTP during the formation of the 70S ribosomal complex. The protein is Translation initiation factor IF-2 of Coxiella burnetii (strain RSA 331 / Henzerling II).